The following is a 379-amino-acid chain: Chaperone protein DnaJ (379 aa).

The 66-residue stretch at 6 to 71 folds into the J domain; the sequence is DYYEVLGVDK…QKRSRYDQFG (66 aa). The CR-type zinc finger occupies 138 to 220; it reads GVEREINVSK…CNGKGRLRST (83 aa). Zn(2+)-binding residues include Cys-151, Cys-154, Cys-168, Cys-171, Cys-194, Cys-197, Cys-208, and Cys-211. CXXCXGXG motif repeat units lie at residues 151–158, 168–175, 194–201, and 208–215; these read CSKCTGSG, CNHCNGTG, CDACKGEG, and CPACNGKG.

The protein belongs to the DnaJ family. Homodimer. Zn(2+) is required as a cofactor.

The protein localises to the cytoplasm. In terms of biological role, participates actively in the response to hyperosmotic and heat shock by preventing the aggregation of stress-denatured proteins and by disaggregating proteins, also in an autonomous, DnaK-independent fashion. Unfolded proteins bind initially to DnaJ; upon interaction with the DnaJ-bound protein, DnaK hydrolyzes its bound ATP, resulting in the formation of a stable complex. GrpE releases ADP from DnaK; ATP binding to DnaK triggers the release of the substrate protein, thus completing the reaction cycle. Several rounds of ATP-dependent interactions between DnaJ, DnaK and GrpE are required for fully efficient folding. Also involved, together with DnaK and GrpE, in the DNA replication of plasmids through activation of initiation proteins. This chain is Chaperone protein DnaJ, found in Ruminiclostridium cellulolyticum (strain ATCC 35319 / DSM 5812 / JCM 6584 / H10) (Clostridium cellulolyticum).